The primary structure comprises 556 residues: Formate--tetrahydrofolate ligase (556 aa).

Residue 65–72 (TPAGEGKS) coordinates ATP.

Belongs to the formate--tetrahydrofolate ligase family.

It carries out the reaction (6S)-5,6,7,8-tetrahydrofolate + formate + ATP = (6R)-10-formyltetrahydrofolate + ADP + phosphate. The protein operates within one-carbon metabolism; tetrahydrofolate interconversion. In Clostridium botulinum (strain Alaska E43 / Type E3), this protein is Formate--tetrahydrofolate ligase.